The sequence spans 311 residues: Protoheme IX farnesyltransferase (311 aa).

8 helical membrane passes run 30 to 50 (VVQL…PGWP), 55 to 75 (WGVA…AAAF), 108 to 128 (FAVL…NALT), 129 to 149 (MWLT…LLKP), 153 to 173 (QNIV…WAAM), 182 to 202 (WILC…LALY), 233 to 253 (FVLF…WFYL), and 287 to 307 (IWHL…GPLL).

The protein belongs to the UbiA prenyltransferase family. Protoheme IX farnesyltransferase subfamily.

It is found in the cell inner membrane. It catalyses the reaction heme b + (2E,6E)-farnesyl diphosphate + H2O = Fe(II)-heme o + diphosphate. It participates in porphyrin-containing compound metabolism; heme O biosynthesis; heme O from protoheme: step 1/1. Converts heme B (protoheme IX) to heme O by substitution of the vinyl group on carbon 2 of heme B porphyrin ring with a hydroxyethyl farnesyl side group. The chain is Protoheme IX farnesyltransferase from Methylibium petroleiphilum (strain ATCC BAA-1232 / LMG 22953 / PM1).